A 58-amino-acid polypeptide reads, in one-letter code: Potassium channel toxin alpha-KTx 26.2 (58 aa).

The first 19 residues, 1-19 (MKTIFVVILVLFVLSAMLA), serve as a signal peptide directing secretion. 3 disulfides stabilise this stretch: cysteine 31–cysteine 49, cysteine 35–cysteine 54, and cysteine 39–cysteine 56.

Belongs to the short scorpion toxin superfamily. Potassium channel inhibitor family. Alpha-KTx 26 subfamily. As to expression, expressed by the venom gland.

Its subcellular location is the secreted. Its function is as follows. Inhibits voltage-gated potassium channels. This chain is Potassium channel toxin alpha-KTx 26.2, found in Lychas mucronatus (Chinese swimming scorpion).